A 387-amino-acid polypeptide reads, in one-letter code: Glutamate N-acetyltransferase (387 aa).

Substrate-binding residues include Thr140, Lys162, Thr173, Glu257, Asn382, and Thr387. Residue Thr173 is the Nucleophile of the active site.

This sequence belongs to the ArgJ family. Heterotetramer of two alpha and two beta chains.

It is found in the cytoplasm. The enzyme catalyses N(2)-acetyl-L-ornithine + L-glutamate = N-acetyl-L-glutamate + L-ornithine. It functions in the pathway amino-acid biosynthesis; L-arginine biosynthesis; L-ornithine and N-acetyl-L-glutamate from L-glutamate and N(2)-acetyl-L-ornithine (cyclic): step 1/1. Catalyzes the transfer of the acetyl group from N(2)-acetylornithine to glutamate, forming N-acetylglutamate and L-ornithine. The protein is Glutamate N-acetyltransferase of Methanopyrus kandleri (strain AV19 / DSM 6324 / JCM 9639 / NBRC 100938).